The chain runs to 238 residues: Probable transcriptional regulatory protein CPn_0573/CP_0176/CPj0573/CpB0595 (238 aa).

The disordered stretch occupies residues 1–20; the sequence is MAGHSKWANTKHRKERADHK. Basic residues predominate over residues 9-20; sequence NTKHRKERADHK.

It belongs to the TACO1 family.

It localises to the cytoplasm. The chain is Probable transcriptional regulatory protein CPn_0573/CP_0176/CPj0573/CpB0595 from Chlamydia pneumoniae (Chlamydophila pneumoniae).